An 82-amino-acid polypeptide reads, in one-letter code: Putative membrane protein insertion efficiency factor (82 aa).

It belongs to the UPF0161 family.

It is found in the cell inner membrane. Its function is as follows. Could be involved in insertion of integral membrane proteins into the membrane. The protein is Putative membrane protein insertion efficiency factor of Rickettsia africae (strain ESF-5).